A 266-amino-acid polypeptide reads, in one-letter code: Histidinol-phosphatase (266 aa).

Mg(2+) contacts are provided by glutamate 69, aspartate 84, isoleucine 86, and aspartate 87. Glutamate 69 provides a ligand contact to substrate. Substrate-binding positions include 86–89 (IDGT), arginine 190, and aspartate 218. Aspartate 218 is a binding site for Mg(2+).

Belongs to the inositol monophosphatase superfamily. Mg(2+) serves as cofactor.

The enzyme catalyses L-histidinol phosphate + H2O = L-histidinol + phosphate. The protein operates within amino-acid biosynthesis; L-histidine biosynthesis; L-histidine from 5-phospho-alpha-D-ribose 1-diphosphate: step 8/9. Catalyzes the dephosphorylation of histidinol-phosphate to histidinol, the direct precursor of histidine. The protein is Histidinol-phosphatase of Streptomyces coelicolor (strain ATCC BAA-471 / A3(2) / M145).